The chain runs to 362 residues: NAD(P)H-quinone oxidoreductase subunit 1, chloroplastic (362 aa).

8 helical membrane-spanning segments follow: residues 29–49, 103–123, 128–148, 164–184, 202–222, 247–267, 303–323, and 335–355; these read ILPI…IVWL, IAVI…HFVL, IGVF…LMAG, AAQS…ISLL, FFGW…ISSL, YSGI…LVSS, TMGI…SITI, and LLNL…LLTT.

Belongs to the complex I subunit 1 family. NDH is composed of at least 16 different subunits, 5 of which are encoded in the nucleus.

The protein localises to the plastid. It localises to the chloroplast thylakoid membrane. The enzyme catalyses a plastoquinone + NADH + (n+1) H(+)(in) = a plastoquinol + NAD(+) + n H(+)(out). It catalyses the reaction a plastoquinone + NADPH + (n+1) H(+)(in) = a plastoquinol + NADP(+) + n H(+)(out). Its function is as follows. NDH shuttles electrons from NAD(P)H:plastoquinone, via FMN and iron-sulfur (Fe-S) centers, to quinones in the photosynthetic chain and possibly in a chloroplast respiratory chain. The immediate electron acceptor for the enzyme in this species is believed to be plastoquinone. Couples the redox reaction to proton translocation, and thus conserves the redox energy in a proton gradient. The protein is NAD(P)H-quinone oxidoreductase subunit 1, chloroplastic of Triticum aestivum (Wheat).